The sequence spans 90 residues: Molybdopterin synthase sulfur carrier subunit (90 aa).

G90 carries the post-translational modification 1-thioglycine; alternate. At G90 the chain carries Glycyl adenylate; alternate.

The protein belongs to the MoaD family. MOCS2A subfamily. As to quaternary structure, heterotetramer; composed of 2 small (Mocs2A) and 2 large (Mocs2B) subunits. In terms of processing, C-terminal thiocarboxylation occurs in 2 steps, it is first acyl-adenylated (-COAMP) via the hesA/moeB/thiF part of MOCS3, then thiocarboxylated (-COSH) via the rhodanese domain of MOCS3.

The protein localises to the cytoplasm. Its pathway is cofactor biosynthesis; molybdopterin biosynthesis. Functionally, acts as a sulfur carrier required for molybdopterin biosynthesis. Component of the molybdopterin synthase complex that catalyzes the conversion of precursor Z into molybdopterin by mediating the incorporation of 2 sulfur atoms into precursor Z to generate a dithiolene group. In the complex, serves as sulfur donor by being thiocarboxylated (-COSH) at its C-terminus by MOCS3. After interaction with Mocs2B, the sulfur is then transferred to precursor Z to form molybdopterin. The sequence is that of Molybdopterin synthase sulfur carrier subunit from Drosophila simulans (Fruit fly).